The sequence spans 1162 residues: Lysine-specific demethylase 2A (1162 aa).

At Ser28 the chain carries Phosphoserine. In terms of domain architecture, JmjC spans 148–316; it reads FSHTRLENMV…MQLKIYNIED (169 aa). A substrate-binding site is contributed by Thr209. Fe cation contacts are provided by His212 and Asp214. Lys229 contacts substrate. His284 provides a ligand contact to Fe cation. A disordered region spans residues 367 to 389; it reads GLESGNGDEEAVDREPRRLSSRR. Residues Ser390 and Ser394 each carry the phosphoserine modification. A Glycyl lysine isopeptide (Lys-Gly) (interchain with G-Cter in SUMO2) cross-link involves residue Lys505. Residues 532–557 form a disordered region; it reads VPTIPITKPHTMKPAPRLTPVRPAAA. The residue at position 550 (Thr550) is a Phosphothreonine. A Phosphoserine modification is found at Ser558. The CXXC-type zinc finger occupies 564–610; sequence ARRRRVRCRKCKACVQGECGVCHYCRDMKKFGGPGRMKQSCVLRQCL. Positions 571, 574, 577, 582, 585, 588, 604, 609, 620, and 623 each coordinate Zn(2+). Residues 617–678 form a PHD-type zinc finger; the sequence is SVTCSLCGEV…CWECPKCYQE (62 aa). Thr632 bears the Phosphothreonine mark. Residues Cys642, Cys645, His650, Cys653, Cys672, and Cys675 each coordinate Zn(2+). A Phosphoserine modification is found at Ser692. The tract at residues 704–789 is disordered; that stretch reads PLRSCDEPLT…PSGKKELSEV (86 aa). Residue Thr713 is modified to Phosphothreonine. Phosphoserine is present on residues Ser718 and Ser731. Basic and acidic residues-rich tracts occupy residues 746–757 and 771–789; these read SDHHSASRDERF and TMVREKENNPSGKKELSEV. Phosphoserine occurs at positions 825, 832, 869, and 883. The tract at residues 839–887 is disordered; it reads HCPARTPQRGDEEGLGGEEEEEEEEEEEDDSAEEGGAARLNGRGSWAQD. Acidic residues predominate over residues 851–871; that stretch reads EGLGGEEEEEEEEEEEDDSAE. The F-box domain maps to 889–936; that stretch reads DESWMQREVWMSVFRYLSRRELCECMRVCKTWYKWCCDKRLWTKIDLS. LRR repeat units follow at residues 961 to 982 and 984 to 1010; these read WTNISKKQLTWLVNRLPGLKDL and LAGCSWSAVSALSTSSCPLLRTLDLRW. Arg1020 carries the post-translational modification ADP-ribosylarginine. 4 LRR repeats span residues 1048–1073, 1074–1103, 1104–1128, and 1129–1156; these read GLDITDATLRLIIRHMPLLSRLDLSH, CSHLTDQSSNLLTAVGSSTRYSLTELNMAG, CNKLTDQTLIYLRRIANVTLIDLRG, and CKQITRKACEHFISDLSINSLYCLSDEK.

Belongs to the JHDM1 histone demethylase family. Interacts with CBX5/HP1A; the interaction promotes CBX5 localization to chromatin. The SKP1-KDM2A complex interacts with UBB. Part of a SCF (SKP1-cullin-F-box) protein ligase complex. Fe(2+) is required as a cofactor. Post-translationally, mono-ADP-ribosylated at Arg-1020 in response to DNA damage, leading to displacement from chromatin, resulting in increased dimethylation of histone H3 at 'Lys-36'. In terms of tissue distribution, widely expressed, with highest levels in brain, testis and ovary, followed by lung.

The protein localises to the nucleus. The protein resides in the nucleoplasm. Its subcellular location is the chromosome. The catalysed reaction is N(6),N(6)-dimethyl-L-lysyl(36)-[histone H3] + 2 2-oxoglutarate + 2 O2 = L-lysyl(36)-[histone H3] + 2 formaldehyde + 2 succinate + 2 CO2. Histone demethylase that specifically demethylates 'Lys-36' of histone H3, thereby playing a central role in histone code. Preferentially demethylates dimethylated H3 'Lys-36' residue while it has weak or no activity for mono- and tri-methylated H3 'Lys-36'. May also recognize and bind to some phosphorylated proteins and promote their ubiquitination and degradation. Required to maintain the heterochromatic state. Associates with centromeres and represses transcription of small non-coding RNAs that are encoded by the clusters of satellite repeats at the centromere. Required to sustain centromeric integrity and genomic stability, particularly during mitosis. Regulates circadian gene expression by repressing the transcriptional activator activity of CLOCK-BMAL1 heterodimer and RORA in a catalytically-independent manner. The protein is Lysine-specific demethylase 2A (KDM2A) of Homo sapiens (Human).